The following is a 472-amino-acid chain: MKQSAIALALLSCLITPVSQAQTSQNINILENRAAQGDITMPGGARRLSGDQTEALRASLNDKPAKNIILLIGDGMGDSEITAARNYAEGAGGYFKGIDALPLTGQYTHYALDKKTGKPDYVTDSAASATAWTTGVKTYNGALGVDIHENPHTTILEMAKAAGLATGNVSTAELQDATPAALVSHVTSRKCYGPSVTSEKCPGNALEKGGKGSITEQLLNARADVTLGGGAKTFAETATAGEWQGKTLREQALARGYQIVSDAASLAAVTQAGQDKPLLGLFAEGNMPVRWHGPKASYHGNLDKPAVTCTPNPQRNETVPTLAQMTDKAIELLSKNERGFFLQVEGASIDKQDHAANPCGQIGETVDLDEAVQRALEFAKKDGNTLVIVTADHAHSSQIVAPDTKAPGLTQALNTKDGAVMAISYGNSEEDSQEHTGSQLRIAAYGPNAANVVGLTDQTDLFYTMKAALGLQ.

The signal sequence occupies residues 1-21 (MKQSAIALALLSCLITPVSQA). Mg(2+) is bound at residue aspartate 74. Residue aspartate 74 coordinates Zn(2+). The active-site Phosphoserine intermediate is the serine 125. 2 residues coordinate Mg(2+): aspartate 176 and threonine 178. Cystine bridges form between cysteine 191-cysteine 201 and cysteine 309-cysteine 359. Mg(2+) is bound at residue glutamate 345. Residues aspartate 350, histidine 354, aspartate 392, histidine 393, and histidine 435 each contribute to the Zn(2+) site.

This sequence belongs to the alkaline phosphatase family. In terms of assembly, homodimer. The cofactor is Mg(2+). Requires Zn(2+) as cofactor.

Its subcellular location is the periplasm. It catalyses the reaction a phosphate monoester + H2O = an alcohol + phosphate. The sequence is that of Alkaline phosphatase (phoA) from Escherichia fergusonii (strain ATCC 35469 / DSM 13698 / CCUG 18766 / IAM 14443 / JCM 21226 / LMG 7866 / NBRC 102419 / NCTC 12128 / CDC 0568-73).